Here is a 581-residue protein sequence, read N- to C-terminus: Protein phosphatase 2C 70 (581 aa).

The Extracellular segment spans residues 1-7 (MAMIGMN). The helical transmembrane segment at 8–28 (IIGLFMVLMLLLISLIILFAC) threads the bilayer. The Cytoplasmic segment spans residues 29-581 (KPWRYFSRFR…IIYLDFDTSL (553 aa)). Positions 208-259 (VKLGRVSPSDLALKDSEVSGKHAQITWNSTKFKWELVDMGSLNGTLVNSHSI) constitute an FHA domain. The 274-residue stretch at 304 to 577 (KIGVASDPMA…DNTSIIYLDF (274 aa)) folds into the PPM-type phosphatase domain. Residues Asp346, Gly347, Asp521, and Asp568 each coordinate Mn(2+).

Association of RLK5 with kapp domain is dependent on phosphorylation of RLK5 and can be abolished by dephosphorylation. Interacts with SERK1 and CDC48A. Component of the SERK1 signaling complex, composed of KAPP, CDC48A, GRF6 or GRF7, SERK1, SERK2, SERK3/BAK1 and BRI1. Interacts with CLV1. It depends on Mg(2+) as a cofactor. Mn(2+) is required as a cofactor. Expressed in all tissues examined.

The protein resides in the cell membrane. It carries out the reaction O-phospho-L-seryl-[protein] + H2O = L-seryl-[protein] + phosphate. The enzyme catalyses O-phospho-L-threonyl-[protein] + H2O = L-threonyl-[protein] + phosphate. In terms of biological role, dephosphorylates the Ser/Thr receptor-like kinase RLK5. May function as a signaling component in a pathway involving RLK5. Binds and dephosphorylates CLAVATA1 (CLV1). Functions as a negative regulator of the CLV1 signaling in plant development. Dephosphorylates SERK1 receptor kinase on threonine residues in the A-loop. Dephosphorylation of SERK1 controls SERK1 internalization. Component of a signaling pathway which mediates adaptation to NaCl stress. Is not a component of the SALT OVERLY SENSITIVE (SOS) pathway. In Arabidopsis thaliana (Mouse-ear cress), this protein is Protein phosphatase 2C 70.